Consider the following 336-residue polypeptide: Alpha-glucoside transport system permease protein AglF (336 aa).

The next 8 helical transmembrane spans lie at 4–24 (LIAA…YFWS), 55–75 (PWLF…YPVV), 113–133 (FLWL…IAAL), 146–166 (LIFM…KFIY), 176–196 (IGLL…WITL), 202–222 (FFLM…ILSA), 258–278 (IAVV…IVLA), and 304–324 (FGRG…IMIW). Positions 109–325 (IFNNFLWLLV…ILVVPIMIWN (217 aa)) constitute an ABC transmembrane type-1 domain.

This sequence belongs to the binding-protein-dependent transport system permease family. MalFG subfamily.

The protein localises to the cell inner membrane. Its function is as follows. Part of the binding-protein-dependent transport system for alpha-glucosides such as sucrose, maltose and trehalose. Probably responsible for the translocation of the substrate across the membrane. This chain is Alpha-glucoside transport system permease protein AglF (aglF), found in Rhizobium meliloti (strain 1021) (Ensifer meliloti).